The primary structure comprises 375 residues: Actin-binding Rho-activating protein (375 aa).

Positions 37–101 are disordered; sequence ANENSTRQAQ…ATEVSHIKRK (65 aa). Residues 80–101 show a composition bias toward basic and acidic residues; it reads PDGDREGRGSEEATEVSHIKRK. 2 positions are modified to phosphoserine: Ser150 and Ser182. The segment at 175-197 is disordered; the sequence is EPKWKSDSIDTEDSGYGGDMEER. Actin-binding regions lie at residues 193-293 and 294-375; these read DMEE…AERA and KRAE…TLLE. Interaction with actin regions lie at residues 234–279 and 346–375; these read SQVD…GDEG and MRARKHGLVHFEGEMLWQGKDDHVVITLLE.

As to quaternary structure, binds F-actin and ABLIM1, ABLIM2 and ABLIM3. Interaction with ABLIM2 and ABLIM3 enhances activity. As to expression, predominantly expressed in heart and skeletal muscle, and expressed at lower levels in adrenal gland, brain, kidney, liver, and testis.

The protein resides in the cytoplasm. It localises to the myofibril. The protein localises to the sarcomere. Its subcellular location is the cytoskeleton. Functionally, acts as an activator of serum response factor (SRF)-dependent transcription possibly by inducing nuclear translocation of MKL1 or MKL2 and through a mechanism requiring Rho-actin signaling. This Rattus norvegicus (Rat) protein is Actin-binding Rho-activating protein.